We begin with the raw amino-acid sequence, 440 residues long: MTKRQPLYKSLYVQVLVAITIGILLGHYYPETGVALKPLGDGFVKLIKMVIAPIIFCTVVSGIAGMQSMKSVGKTGGYALLYFEIVSTIALIIGLVVVNVVQPGAGMHVDVSTLNASSVAAYAAAGAQQTTVGFLLNVIPNTVVGAFANGDILQVLMFSVLFGFALHRLGSYGKPVLDLIDRFAHVMFNIINMIMKLAPIGAFGAMAFTIGQYGVGSLVQLGYLMACFYITCILFVLVVLGGICRAHGFSVIKLIRYIREELLIVLGTSSSESALPRMLAKMERLGAKKSVVGLVIPTGYSFNLDGTSIYLTMAAVFIAQATDTTMDITHQITLLLVLLVASKGAAGVTGSGFIVLAATLSAVGHLPVAGLALILGIDRFMSEARALTNLIGNAVATVVVAKWVKELDTDQLQAELASGGSPLVDTRPTDDLGVAEGPAR.

9 consecutive transmembrane segments (helical) span residues 15–35 (VLVA…TGVA), 46–66 (LIKM…IAGM), 78–98 (YALL…LVVV), 146–166 (AFAN…GFAL), 190–210 (IINM…AFTI), 224–244 (LMAC…GGIC), 291–311 (VVGL…SIYL), 332–352 (ITLL…TGSG), and 354–374 (IVLA…LALI). Residues 419–440 (GGSPLVDTRPTDDLGVAEGPAR) form a disordered region.

Belongs to the dicarboxylate/amino acid:cation symporter (DAACS) (TC 2.A.23) family.

Its subcellular location is the cell inner membrane. Functionally, responsible for the transport of dicarboxylates such as succinate, fumarate, and malate from the periplasm across the membrane. The sequence is that of C4-dicarboxylate transport protein from Pseudomonas entomophila (strain L48).